The following is a 179-amino-acid chain: Bifunctional protein PyrR (179 aa).

Positions 100 to 112 (VILVDDVLFTGRT) match the PRPP-binding motif.

This sequence belongs to the purine/pyrimidine phosphoribosyltransferase family. PyrR subfamily. In terms of assembly, homodimer and homohexamer; in equilibrium.

The catalysed reaction is UMP + diphosphate = 5-phospho-alpha-D-ribose 1-diphosphate + uracil. Its function is as follows. Regulates transcriptional attenuation of the pyrimidine nucleotide (pyr) operon by binding in a uridine-dependent manner to specific sites on pyr mRNA. This disrupts an antiterminator hairpin in the RNA and favors formation of a downstream transcription terminator, leading to a reduced expression of downstream genes. Functionally, also displays a weak uracil phosphoribosyltransferase activity which is not physiologically significant. The polypeptide is Bifunctional protein PyrR (Geobacillus thermodenitrificans (strain NG80-2)).